The sequence spans 565 residues: Arginine--tRNA ligase (565 aa).

The 'HIGH' region motif lies at 128-138 (ANPTGPLHVGH).

Belongs to the class-I aminoacyl-tRNA synthetase family. Monomer.

The protein localises to the cytoplasm. It catalyses the reaction tRNA(Arg) + L-arginine + ATP = L-arginyl-tRNA(Arg) + AMP + diphosphate. This chain is Arginine--tRNA ligase, found in Albidiferax ferrireducens (strain ATCC BAA-621 / DSM 15236 / T118) (Rhodoferax ferrireducens).